Consider the following 550-residue polypeptide: Hydroxylamine reductase (550 aa).

The [2Fe-2S] cluster site is built by C3, C6, C18, and C25. Positions 249, 273, 317, 405, 433, 458, 492, and 494 each coordinate hybrid [4Fe-2O-2S] cluster. C405 carries the cysteine persulfide modification.

It belongs to the HCP family. It depends on [2Fe-2S] cluster as a cofactor. The cofactor is hybrid [4Fe-2O-2S] cluster.

The protein resides in the cytoplasm. The catalysed reaction is A + NH4(+) + H2O = hydroxylamine + AH2 + H(+). In terms of biological role, catalyzes the reduction of hydroxylamine to form NH(3) and H(2)O. The polypeptide is Hydroxylamine reductase (Escherichia fergusonii (strain ATCC 35469 / DSM 13698 / CCUG 18766 / IAM 14443 / JCM 21226 / LMG 7866 / NBRC 102419 / NCTC 12128 / CDC 0568-73)).